Reading from the N-terminus, the 782-residue chain is cGMP-specific 3',5'-cyclic phosphodiesterase gamma (782 aa).

The Cytoplasmic segment spans residues 1–69 (MKHMFKNILF…LCDNMYSKKY (69 aa)). Residues 70–90 (VILVSHLISLLLMYSVCLIVG) form a helical membrane-spanning segment. The Extracellular segment spans residues 91 to 97 (NINDLFS). A helical membrane pass occupies residues 98–118 (VLKLTYILLHTFTAINIILIL). Residues 119 to 135 (TLHATHYVEMFKSIKGE) are Cytoplasmic-facing. Residues 136–156 (IFIFYIMMIFVIWCSWLFILF) traverse the membrane as a helical segment. Residues 157–181 (NNIKDLLPIVVNVNNFLYATYANNK) lie on the Extracellular side of the membrane. The helical transmembrane segment at 182-202 (INIVLGFFAYLPIFYLITIIP) threads the bilayer. The Cytoplasmic portion of the chain corresponds to 203-208 (CRICYS). A helical transmembrane segment spans residues 209-229 (CAFDILFFIMKVAIFSVYYLI). Residues 230–239 (TMKSYILTDN) are Extracellular-facing. The chain crosses the membrane as a helical span at residues 240 to 260 (IFMIISALVGSLFIFVIRYII). At 261–782 (EIQRRLSFHN…YAPNLNIYKL (522 aa)) the chain is on the cytoplasmic side. The disordered stretch occupies residues 376–396 (GSKEEPEAESESECVDESKEG). A compositionally biased stretch (acidic residues) spans 381 to 390 (PEAESESECV). Residues 423-751 (YEEKENEILK…SKWTKIEKDE (329 aa)) form the PDEase domain. The Proton donor role is filled by His504. 504–508 (HNSIH) serves as a coordination point for a nucleoside 3',5'-cyclic phosphate. 4 residues coordinate a divalent metal cation: His508, His544, Asp545, and Asp654. Residues Asp545, Asp654, and Gln706 each contribute to the a nucleoside 3',5'-cyclic phosphate site.

This sequence belongs to the cyclic nucleotide phosphodiesterase family. Requires a divalent metal cation as cofactor.

The protein resides in the membrane. It localises to the endoplasmic reticulum membrane. It carries out the reaction 3',5'-cyclic GMP + H2O = GMP + H(+). It participates in purine metabolism; 3',5'-cyclic GMP degradation; GMP from 3',5'-cyclic GMP: step 1/1. In terms of biological role, specifically hydrolyzes the second messenger cGMP, which is a key regulator of many important physiological processes. Probably by regulating cGMP levels, required for sporozoite motility and invasion of the mosquito salivary glands. The protein is cGMP-specific 3',5'-cyclic phosphodiesterase gamma of Plasmodium yoelii.